The following is a 772-amino-acid chain: MAFTFLSPHPVFLSLTGTTSSFSYKPVLLPFSRNSRTLTVAAGPARRNSYPNPADDDPPEAPEDSMHGVSKFQQIQRQAARARKLEEEDFEKNRNTYLSAIADVEDAAETGRDDEESGGDLFSDIDRAISMKRSEFVKQGLLKPNPPKTASLKKIGEEGNEEEGDVTDDVDELDEEEVVDLDEIDKLTGLTEISDEEDWVDEEGNTRINKKKEFGSDHQFEFDLDDFGESKARIVEPKFKMCLAELLDESKVVPISVYGDLDVEITGIQHDSRGVSAGDLFVCCLGSENFLSEADKRGAVAVVASKEIDIEDTLGCRALVIVEDTNAVLAALASSFYRHPSKNMSVIGVTGTDGKTTTTYLIKSLYEAMGVRTGMFSTVSCYIHGDNKLDTPNATMNPDAVLVQSLMAKMLHNGTESLVMEASPQELALGKCDEVDFDIAVFTNLTRENTDFRGTDEEYRDAEAKLFSRMVDPERHRKVVNIDDPNAAFFVQQGNPNVPVVTFAMENTKADVHPLKFELSLFETQVLVNTPQGILEISSGLLGRHNIYNILAAVAVGIAVGAPLEDIVRGVEEVDAVPGRCELIDEEQAFGVIVDHANTPDGLSRLLDSIRELKPRRIITVIGCEGENERGKRPLMTKIATEKSDVTMLTSDNPRNEDPLDILDDMLSGIGWTMQEYLKHGEHDYYPPLANGHRLFLHDIRRVAVRCAVAMGEEGDMVVVAGKGHEAYQLEGEKKEFYDDREECREALQYVDELHQAGIDTSEFPWRLPESH.

The transit peptide at 1 to 40 directs the protein to the chloroplast; it reads MAFTFLSPHPVFLSLTGTTSSFSYKPVLLPFSRNSRTLTV. Disordered stretches follow at residues 42–87 and 141–168; these read AGPA…KLEE and LLKP…DVTD. 2 stretches are compositionally biased toward acidic residues: residues 54 to 63 and 158 to 168; these read ADDDPPEAPE and EGNEEEGDVTD. Serine 194 is subject to Phosphoserine.

The protein belongs to the MurCDEF family. MurE subfamily. In terms of assembly, component of the plastid-encoded plastid RNA polymerase (PEP) complex. As to expression, expressed in leaves and flowers.

It localises to the plastid. The protein resides in the chloroplast. Its function is as follows. Involved in chloroplast biogenesis. Required for thylakoid membrane development. Seems to be required for plastid-encoded plastid RNA polymerase (PEP)-dependent gene expression. The protein is UDP-N-acetylmuramoyl-L-alanyl-D-glutamate--2,6-diaminopimelate ligase MurE homolog, chloroplastic of Arabidopsis thaliana (Mouse-ear cress).